We begin with the raw amino-acid sequence, 755 residues long: Polyribonucleotide nucleotidyltransferase (755 aa).

Positions 545 and 551 each coordinate Mg(2+). The region spanning 611–670 (PRITAITVPVNKIGEVIGPKGKTINSITEETGANISIEEDGTVYVSAASGAAAEAAIEKI) is the KH domain. Positions 682–751 (GERFLGTVVK…NRGKISLAPV (70 aa)) constitute an S1 motif domain.

Belongs to the polyribonucleotide nucleotidyltransferase family. Mg(2+) is required as a cofactor.

The protein localises to the cytoplasm. The enzyme catalyses RNA(n+1) + phosphate = RNA(n) + a ribonucleoside 5'-diphosphate. Functionally, involved in mRNA degradation. Catalyzes the phosphorolysis of single-stranded polyribonucleotides processively in the 3'- to 5'-direction. The polypeptide is Polyribonucleotide nucleotidyltransferase (Corynebacterium diphtheriae (strain ATCC 700971 / NCTC 13129 / Biotype gravis)).